We begin with the raw amino-acid sequence, 186 residues long: MTVADAKKTADQKMQKSIETLKADLAKVRTGRAHTGILDHVMVEYYGNPTNLTQVANVTLIDARTIGVQPFEKKMVAVVEKAIRDADLGLNPATQGEMIRVPTPPLTEERRKEMVKLVKSEAEDAKIAIRNIRRDANETLKKLLKDKACSEDDERRAQDEIQKLTDKFVLEVDKLVVEKEKEVLTV.

It belongs to the RRF family.

Its subcellular location is the cytoplasm. Responsible for the release of ribosomes from messenger RNA at the termination of protein biosynthesis. May increase the efficiency of translation by recycling ribosomes from one round of translation to another. The polypeptide is Ribosome-recycling factor (Herminiimonas arsenicoxydans).